A 90-amino-acid chain; its full sequence is U-scoloptoxin(15)-Sa3a (90 aa).

A signal peptide spans 1–18; that stretch reads MKMVYLGLFLIITSCVIS.

It belongs to the scoloptoxin-15 family. In terms of processing, contains 3 disulfide bonds. As to expression, expressed by the venom gland.

Its subcellular location is the secreted. The protein is U-scoloptoxin(15)-Sa3a of Scolopendra alternans (Florida Keys giant centipede).